A 359-amino-acid chain; its full sequence is MSMSGSKKDVESEKQKALDAAISQIERAFGRGAIMKLKQHPAEKMDSVSTGSIALDAALGIGGLPKGRIVEIFGPESSGKTTLALHVIAEAQKQGGNCAFIDAEHALDTVYARKLGVNVGDLIVSQPDTGEQALHIVEYLVCSGAIDVIVVDSVAALTPRAEIEGDMGDQHMGLQARLLSHALRKLTSVVSKANCILVFINQIRIKIGVIYGNPEVTTGGSALKFYTSIRLDIRKVSAIKDKDNVIGNQTRVKVVKNKVAPPFKQAEFDIVYNEGISKLGEIVDMGVKFGFVEKSGAHYSYGAVKLGQGRENAKGYLKSNPDIANELEQKIRACLAESMHSSDLFAVDERTDVLEEEVF.

ATP is bound at residue 74–81; it reads GPESSGKT.

The protein belongs to the RecA family.

It localises to the cytoplasm. Functionally, can catalyze the hydrolysis of ATP in the presence of single-stranded DNA, the ATP-dependent uptake of single-stranded DNA by duplex DNA, and the ATP-dependent hybridization of homologous single-stranded DNAs. It interacts with LexA causing its activation and leading to its autocatalytic cleavage. This chain is Protein RecA, found in Anaplasma marginale (strain Florida).